A 766-amino-acid chain; its full sequence is BMP/retinoic acid-inducible neural-specific protein 3 (766 aa).

An N-terminal signal peptide occupies residues 1–33; sequence MIWRRRAGAELSSLMALWEWIVLSLHCWVLAVA. The 191-residue stretch at 74–264 folds into the MACPF domain; that stretch reads RYKIYREFGR…FVQAALSYIA (191 aa). Asparagine 168, asparagine 337, asparagine 456, asparagine 562, asparagine 609, and asparagine 641 each carry an N-linked (GlcNAc...) asparagine glycan.

The protein belongs to the BRINP family. As to expression, expressed in olfactory bulb, cerebellum and neuronal layers in hippocampus.

The protein localises to the secreted. It localises to the mitochondrion. In terms of biological role, inhibits neuronal cell proliferation by negative regulation of the cell cycle transition. Promotes pituitary gonadotrope cell proliferation, migration and invasion, when overexpressed. May play a role in cell pituitary tumor development. This is BMP/retinoic acid-inducible neural-specific protein 3 (Brinp3) from Rattus norvegicus (Rat).